A 435-amino-acid chain; its full sequence is Serine/threonine-protein kinase 40 (435 aa).

A compositionally biased stretch (basic and acidic residues) spans 1-10 (MKRRASDRGA). Positions 1 to 25 (MKRRASDRGAGETSARAKALGSGIS) are disordered. In terms of domain architecture, Protein kinase spans 35–332 (FILGPRLGNS…DVLEALSAII (298 aa)). ATP contacts are provided by residues 41 to 49 (LGNSPVPSI) and K66. D197 functions as the Proton acceptor in the catalytic mechanism.

The protein belongs to the protein kinase superfamily. CAMK Ser/Thr protein kinase family.

It localises to the nucleus. The protein localises to the cytoplasm. It catalyses the reaction L-seryl-[protein] + ATP = O-phospho-L-seryl-[protein] + ADP + H(+). The catalysed reaction is L-threonyl-[protein] + ATP = O-phospho-L-threonyl-[protein] + ADP + H(+). Its function is as follows. May be a negative regulator of NF-kappa-B and p53-mediated gene transcription. This chain is Serine/threonine-protein kinase 40 (STK40), found in Pongo abelii (Sumatran orangutan).